The primary structure comprises 303 residues: Coenzyme PQQ synthesis protein B (303 aa).

It belongs to the PqqB family.

Its pathway is cofactor biosynthesis; pyrroloquinoline quinone biosynthesis. In terms of biological role, may be involved in the transport of PQQ or its precursor to the periplasm. This chain is Coenzyme PQQ synthesis protein B, found in Acinetobacter baumannii (strain AB0057).